A 681-amino-acid polypeptide reads, in one-letter code: Mitosis inhibitor nif1 (681 aa).

Positions 22 to 43 (LNKKDGNDDDKAEHSKRSGYHG) are disordered. The span at 23-37 (NKKDGNDDDKAEHSK) shows a compositional bias: basic and acidic residues. Residue Ser-70 is modified to Phosphoserine. Disordered stretches follow at residues 80-104 (TTSGSSSDLLNIESPASPAEASSPF) and 182-324 (YYHE…SSRQ). Positions 92 to 103 (ESPASPAEASSP) are enriched in low complexity. A compositionally biased stretch (polar residues) spans 191–203 (TASNTSPTPNSIK). Residue Ser-196 is modified to Phosphoserine. Positions 238-278 (SSGDSTPLSGSSSSKGMLMSMSTSENHSLSSNPELSNSNLL) are enriched in low complexity. The span at 296–306 (SSKEPDKEHST) shows a compositional bias: basic and acidic residues. 2 Sel1-like repeats span residues 547–582 (ALILYELGVCFMHGWGITRDRYLALHLIKLSGAWGD) and 583–618 (ADAQFEAGLQMSLGAVSDKDSHMAAYYYRLAGFQGI).

It localises to the cytoplasm. Functionally, functions as a negative regulator of mitosis. It interacts with the C-terminal of nim1, thereby inhibiting its kinase activity which phosphorylates wee1. This is Mitosis inhibitor nif1 (nif1) from Schizosaccharomyces pombe (strain 972 / ATCC 24843) (Fission yeast).